The primary structure comprises 276 residues: Small ribosomal subunit protein uS3 (276 aa).

One can recognise a KH type-2 domain in the interval 39 to 110 (IRRETMKFLK…KINIKIKEIK (72 aa)).

Belongs to the universal ribosomal protein uS3 family. Part of the 30S ribosomal subunit. Forms a tight complex with proteins S10 and S14.

Functionally, binds the lower part of the 30S subunit head. Binds mRNA in the 70S ribosome, positioning it for translation. The chain is Small ribosomal subunit protein uS3 from Borrelia recurrentis (strain A1).